The sequence spans 533 residues: Flavin-containing monooxygenase 5 (533 aa).

Arg5 is modified (dimethylated arginine). Residues 10-14, Glu33, and 41-42 each bind FAD; these read GAGAS and LW. Residue Ser54 is modified to Phosphoserine. Position 56 is a phosphotyrosine (Tyr56). Ser58 bears the Phosphoserine mark. Residue 62–63 coordinates FAD; sequence NT. An NADP(+)-binding site is contributed by 196-199; the sequence is SGGD. The residue at position 280 (Ser280) is a Phosphoserine. At Thr284 the chain carries Phosphothreonine. Phosphoserine is present on Ser401. The helical transmembrane segment at 513–533 threads the bilayer; it reads MMTMGKFMLAIAFLAIAVVYF.

Belongs to the FMO family. Requires FAD as cofactor. In terms of tissue distribution, kidney and liver.

It is found in the microsome membrane. The protein resides in the endoplasmic reticulum membrane. The catalysed reaction is N,N-dimethylaniline + NADPH + O2 + H(+) = N,N-dimethylaniline N-oxide + NADP(+) + H2O. It catalyses the reaction NADPH + O2 + H(+) = H2O2 + NADP(+). The enzyme catalyses heptan-2-one + NADPH + O2 + H(+) = pentyl acetate + NADP(+) + H2O. It carries out the reaction octan-3-one + NADPH + O2 + H(+) = pentyl propanoate + NADP(+) + H2O. The catalysed reaction is octan-3-one + NADPH + O2 + H(+) = ethyl hexanoate + NADP(+) + H2O. It catalyses the reaction hexan-3-one + NADPH + O2 + H(+) = ethyl butanoate + NADP(+) + H2O. The enzyme catalyses hexan-3-one + NADPH + O2 + H(+) = propyl propanoate + NADP(+) + H2O. It carries out the reaction heptan-4-one + NADPH + O2 + H(+) = propyl butanoate + NADP(+) + H2O. The catalysed reaction is (2E)-geranial + NADPH + O2 + H(+) = (1E)-2,6-dimethylhepta-1,5-dien-1-yl formate + NADP(+) + H2O. It catalyses the reaction sulcatone + NADPH + O2 + H(+) = 4-methylpent-3-en-1-yl acetate + NADP(+) + H2O. In terms of biological role, acts as a Baeyer-Villiger monooxygenase on a broad range of substrates. Catalyzes the insertion of an oxygen atom into a carbon-carbon bond adjacent to a carbonyl, which converts ketones to esters. Active on diverse carbonyl compounds, whereas soft nucleophiles are mostly non- or poorly reactive. In contrast with other forms of FMO it is non- or poorly active on 'classical' substrates such as drugs, pesticides, and dietary components containing soft nucleophilic heteroatoms. Able to oxidize drug molecules bearing a carbonyl group on an aliphatic chain, such as nabumetone and pentoxifylline. Also, in the absence of substrates, shows slow but yet significant NADPH oxidase activity. Acts as a positive modulator of cholesterol biosynthesis as well as glucose homeostasis, promoting metabolic aging via pleiotropic effects. This is Flavin-containing monooxygenase 5 (FMO5) from Oryctolagus cuniculus (Rabbit).